Reading from the N-terminus, the 319-residue chain is L-lactate dehydrogenase (319 aa).

NAD(+)-binding positions include valine 17, aspartate 38, lysine 43, tyrosine 69, and 83-84; that span reads GA. Glutamine 86 and arginine 92 together coordinate substrate. NAD(+) contacts are provided by residues threonine 105, 122–124, and serine 147; that span reads ATN. 124–127 is a binding site for substrate; that stretch reads NPVD. 152–155 lines the substrate pocket; that stretch reads DTAR. Beta-D-fructose 1,6-bisphosphate-binding residues include arginine 157 and histidine 172. Catalysis depends on histidine 179, which acts as the Proton acceptor. At tyrosine 224 the chain carries Phosphotyrosine. Threonine 233 is a substrate binding site.

Belongs to the LDH/MDH superfamily. LDH family. In terms of assembly, homotetramer.

Its subcellular location is the cytoplasm. It catalyses the reaction (S)-lactate + NAD(+) = pyruvate + NADH + H(+). It participates in fermentation; pyruvate fermentation to lactate; (S)-lactate from pyruvate: step 1/1. Its activity is regulated as follows. Allosterically activated by fructose 1,6-bisphosphate (FBP). Functionally, catalyzes the conversion of lactate to pyruvate. The protein is L-lactate dehydrogenase of Geobacillus sp. (strain WCH70).